The following is a 241-amino-acid chain: Probable transcriptional regulatory protein FMG_0893 (241 aa).

The protein belongs to the TACO1 family.

Its subcellular location is the cytoplasm. This Finegoldia magna (strain ATCC 29328 / DSM 20472 / WAL 2508) (Peptostreptococcus magnus) protein is Probable transcriptional regulatory protein FMG_0893.